Here is a 211-residue protein sequence, read N- to C-terminus: Protein-L-isoaspartate O-methyltransferase (211 aa).

Residue Ser62 is part of the active site.

Belongs to the methyltransferase superfamily. L-isoaspartyl/D-aspartyl protein methyltransferase family.

The protein resides in the cytoplasm. The enzyme catalyses [protein]-L-isoaspartate + S-adenosyl-L-methionine = [protein]-L-isoaspartate alpha-methyl ester + S-adenosyl-L-homocysteine. Catalyzes the methyl esterification of L-isoaspartyl residues in peptides and proteins that result from spontaneous decomposition of normal L-aspartyl and L-asparaginyl residues. It plays a role in the repair and/or degradation of damaged proteins. This Shewanella frigidimarina (strain NCIMB 400) protein is Protein-L-isoaspartate O-methyltransferase.